The chain runs to 680 residues: Tumor protein 63 (680 aa).

The tract at residues 1–107 (MNFETSRCAT…MQDSDLSDPM (107 aa)) is transcription activation. The segment covering 123 to 157 (QIQNGSSSTSPYNTDHAQNSVTAPSPYAQPSSTFD) has biased composition (polar residues). Residues 123–171 (QIQNGSSSTSPYNTDHAQNSVTAPSPYAQPSSTFDALSPSPAIPSNTDY) are disordered. Residues 170–362 (DYPGPHSFDV…KADEDSIRKQ (193 aa)) mediate DNA binding. Residues Cys244, His247, Cys308, and Cys312 each contribute to the Zn(2+) site. The segment covering 351–360 (DRKADEDSIR) has biased composition (basic and acidic residues). Disordered regions lie at residues 351 to 393 (DRKA…IKKR) and 436 to 472 (RQQQ…MNSM). Residues 352–388 (RKADEDSIRKQQVSDSAKNGDGTKRPFRQNTHGIQMT) are interaction with HIPK2. The segment covering 379-389 (RQNTHGIQMTS) has biased composition (polar residues). Residues 394-443 (RSPDDELLYLPVRGRETYEMLLKIKESLELMQYLPQHTIETYRQQQQQQH) form an oligomerization region. Low complexity predominate over residues 437 to 463 (QQQQQQHQHLLQKQTSMQSQSSYGNSS). Positions 541 to 607 (PPYPTDCSIV…WKGILDHRQL (67 aa)) constitute an SAM domain. Residues 610–680 (FSSPPHLLRT…KQQRIKEEGE (71 aa)) form a transactivation inhibition region. Residue Lys676 forms a Glycyl lysine isopeptide (Lys-Gly) (interchain with G-Cter in SUMO) linkage.

The protein belongs to the p53 family. As to quaternary structure, binds DNA as a homotetramer. Isoform composition of the tetramer may determine transactivation activity. Interacts with HIPK2. Interacts with SSRP1, leading to stimulate coactivator activity. Interacts with PDS5A. Interacts (via activation domain) with NOC2L. Interacts with WWP1. Zn(2+) is required as a cofactor. Post-translationally, may be sumoylated. Ubiquitinated. Polyubiquitination involves WWP1 and leads to proteasomal degradation of this protein. In terms of tissue distribution, widely expressed, notably in thymus, prostate, placenta and skeletal muscle, although the precise isoform varies according to tissue type. Progenitor cell layers of skin, breast and prostate express high levels of DeltaN-type isoforms.

The protein resides in the nucleus. Functionally, acts as a sequence specific DNA binding transcriptional activator or repressor. The isoforms contain a varying set of transactivation and auto-regulating transactivation inhibiting domains thus showing an isoform specific activity. May be required in conjunction with TP73/p73 for initiation of p53/TP53 dependent apoptosis in response to genotoxic insults and the presence of activated oncogenes. Involved in Notch signaling by probably inducing JAG1 and JAG2. Activates transcription of the p21 promoter. Activates RIPK4 transcription. Plays a role in the regulation of epithelial morphogenesis. The ratio of DeltaN-type and TA*-type isoforms may govern the maintenance of epithelial stem cell compartments and regulate the initiation of epithelial stratification from the undifferentiated embryonal ectoderm. Required for limb formation from the apical ectodermal ridge. The protein is Tumor protein 63 (Tp63) of Mus musculus (Mouse).